A 1375-amino-acid polypeptide reads, in one-letter code: DNA-directed RNA polymerase subunit beta (1375 aa).

The protein belongs to the RNA polymerase beta chain family. In terms of assembly, the RNAP catalytic core consists of 2 alpha, 1 beta, 1 beta' and 1 omega subunit. When a sigma factor is associated with the core the holoenzyme is formed, which can initiate transcription.

The catalysed reaction is RNA(n) + a ribonucleoside 5'-triphosphate = RNA(n+1) + diphosphate. Its function is as follows. DNA-dependent RNA polymerase catalyzes the transcription of DNA into RNA using the four ribonucleoside triphosphates as substrates. This chain is DNA-directed RNA polymerase subunit beta, found in Coxiella burnetii (strain RSA 331 / Henzerling II).